The primary structure comprises 548 residues: MASAAVGNYEEEIVRPVADFSPSLWGDQFLSFSIENQVAEKYAQEIEALKEQTRSMLLENGRKLADTLYLIDIIERLGISYHFEKEIDDILDQIYNQNSNCNDLCTSALQFRLLRQHGFNISPEIFSKFQDENGKFKESLASDFLGLLNLYEASHVRTHADDILEEALAFSTIHLESAAPHLKSPLREQVTHALEQCLHKGVPRVETRFFISSIYEKEQSKNDVLLRFAKLDFNLLQILHKQELAEVSRWWKDLDFVTTLPYARDRVVECYFWALGVYFEPQYSQARVILVKTISMISIVDDTFDAYGTIKELETYTDAIQRWDINEIDRLPDYMKISYKAILDLYKDYEKELSSAGRSHIVCHAIERMKEVVKNYNVESTWFIEGYMPPVSEYLSNALATTTYYYLATTSYLGMKSATEQDFEWLSKNPKILEASVIICRVIDDTATYEVEKSRGQIATGIECCMRDYGVSTKEAMAKFQGMAEAAWKDLNEGFLRPTPVSTEILFRILNLARIVEVTYIHNLDGYTHPEKVLKPHINALLVDSIEI.

Mg(2+) contacts are provided by D301, D305, D444, T448, and E452. The short motif at 301-305 (DDTFD) is the DDXXD motif element.

Belongs to the terpene synthase family. As to quaternary structure, monomer. Requires Mg(2+) as cofactor. As to expression, expressed in roots, but not in shoots.

It is found in the cytoplasm. The catalysed reaction is (2E,6E)-farnesyl diphosphate = (+)-5-epi-aristolochene + diphosphate. It participates in secondary metabolite biosynthesis; terpenoid biosynthesis. In terms of biological role, catalyzes the cyclization of trans,trans-farnesyl diphosphate (FPP) to the bicyclic intermediate 5-epi-aristolochene, initial step in the conversion of FPP to the sesquiterpenoid antifungal phytoalexin capsidiol. Produces germacrene A as an enzyme-bound intermediate that is not released by the enzyme, but is further cyclized to produce the bicyclic 5-epi-aristolochene. This chain is 5-epi-aristolochene synthase 3, found in Nicotiana attenuata (Coyote tobacco).